A 183-amino-acid chain; its full sequence is Capsid protein (183 aa).

Residues 136 to 183 (NAPILSTLPETTVVRRRGRSPRRRTPSPRRRRSQSPRRRRSQSRESQC) are disordered. The span at 149-176 (VRRRGRSPRRRTPSPRRRRSQSPRRRRS) shows a compositional bias: basic residues. Phosphoserine; by host occurs at positions 155, 162, and 170. One copy of the 1; half-length repeat lies at 155-161 (SPRRRTP). A 3 X 8 AA repeats of S-P-R-R-R-[PR]-S-Q region spans residues 155–177 (SPRRRTPSPRRRRSQSPRRRRSQ). The Bipartite nuclear localization signal motif lies at 158–175 (RRTPSPRRRRSQSPRRRR). A run of 2 repeats spans residues 162–169 (SPRRRRSQ) and 170–177 (SPRRRRSQ). Positions 177-183 (QSRESQC) are RNA binding.

It belongs to the orthohepadnavirus core antigen family. In terms of assembly, homodimerizes, then multimerizes. Interacts with cytosol exposed regions of viral L glycoprotein present in the reticulum-to-Golgi compartment. Interacts with human FLNB. Phosphorylated form interacts with host importin alpha; this interaction depends on the exposure of the NLS, which itself depends upon genome maturation and/or phosphorylation of the capsid protein. Interacts with host NUP153. Post-translationally, phosphorylated by host SRPK1, SRPK2, and maybe protein kinase C or GAPDH. Phosphorylation is critical for pregenomic RNA packaging. Protein kinase C phosphorylation is stimulated by HBx protein and may play a role in transport of the viral genome to the nucleus at the late step during the viral replication cycle.

It localises to the virion. Its subcellular location is the host cytoplasm. Functionally, self assembles to form an icosahedral capsid. Most capsids appear to be large particles with an icosahedral symmetry of T=4 and consist of 240 copies of capsid protein, though a fraction forms smaller T=3 particles consisting of 180 capsid proteins. Entering capsids are transported along microtubules to the nucleus. Phosphorylation of the capsid is thought to induce exposure of nuclear localization signal in the C-terminal portion of the capsid protein that allows binding to the nuclear pore complex via the importin (karyopherin-) alpha and beta. Capsids are imported in intact form through the nuclear pore into the nuclear basket, where it probably binds NUP153. Only capsids that contain the mature viral genome can release the viral DNA and capsid protein into the nucleoplasm. Immature capsids get stuck in the basket. Capsids encapsulate the pre-genomic RNA and the P protein. Pre-genomic RNA is reverse-transcribed into DNA while the capsid is still in the cytoplasm. The capsid can then either be directed to the nucleus, providing more genomes for transcription, or bud through the endoplasmic reticulum to provide new virions. This Homo sapiens (Human) protein is Capsid protein.